Consider the following 775-residue polypeptide: Endothelin-converting enzyme-like 1 (775 aa).

At 1–61 (MEAPYSMTAH…LPRWNRREVC (61 aa)) the chain is on the cytoplasmic side. The interval 23-51 (CGTGGARGTSLPPGFPRSSGRSASGARSG) is disordered. A compositionally biased stretch (low complexity) spans 32-51 (SLPPGFPRSSGRSASGARSG). A helical; Signal-anchor for type II membrane protein transmembrane segment spans residues 62-82 (LLSGLVFAAGLCAILAAMLAL). The Lumenal portion of the chain corresponds to 83 to 775 (KYLGPGAAGT…MNPVHKCSVW (693 aa)). The Peptidase M13 domain occupies 99–775 (GCPERKAFAR…MNPVHKCSVW (677 aa)). 4 disulfides stabilise this stretch: Cys-124-Cys-760, Cys-132-Cys-720, Cys-188-Cys-441, and Cys-649-Cys-772. N-linked (GlcNAc...) asparagine glycans are attached at residues Asn-255 and Asn-322. His-612 contacts Zn(2+). Glu-613 is a catalytic residue. Residue His-616 participates in Zn(2+) binding. N-linked (GlcNAc...) asparagine glycosylation is present at Asn-656. Residue Glu-672 participates in Zn(2+) binding. Residue Asp-676 is the Proton donor of the active site.

Belongs to the peptidase M13 family. Zn(2+) serves as cofactor. Highly expressed in the CNS, in particular in neurons of the caudate putamen, diagonal band, the paraventricular nucleus of the thalamus, part of the hypothalamus, in cranial motor nuclei, inferior olive, and substantia gelatinosa of the spinal tract trigeminal nucleus. Not detected in cerebral cortex, hippocampus and cerebellum.

The protein localises to the membrane. Its function is as follows. May contribute to the degradation of peptide hormones and be involved in the inactivation of neuronal peptides. Cleaves the synthetic substrate Z-Gly-Gly-Leu-pNA and releases pNA. May protect against C2-ceramide-induced apoptosis. In Rattus norvegicus (Rat), this protein is Endothelin-converting enzyme-like 1 (Ecel1).